The primary structure comprises 307 residues: Mitochondrial thiamine pyrophosphate carrier 1 (307 aa).

3 Solcar repeats span residues 13–95, 105–190, and 203–305; these read VSTT…IGSF, SPQL…IKIF, and PFTL…FMNK. Helical transmembrane passes span 19 to 36, 76 to 96, 108 to 126, 160 to 184, 210 to 226, and 280 to 297; these read LVAGSLSGLFARTCIAPL, IMYIIYGGAQFGSYTYIGSFL, LYSCLVGSLAGMTSSLASY, MGFFSGCGSSMINIGLNTAIMFGVY, LAGPISGFTSKLATFPL, and GVTMSLIKSVPSTAISLW.

This sequence belongs to the mitochondrial carrier (TC 2.A.29) family.

The protein localises to the mitochondrion inner membrane. Mitochondrial transporter that mediates uptake of thiamine pyrophosphate (ThPP) into mitochondria. This is Mitochondrial thiamine pyrophosphate carrier 1 (TPC1) from Candida glabrata (strain ATCC 2001 / BCRC 20586 / JCM 3761 / NBRC 0622 / NRRL Y-65 / CBS 138) (Yeast).